Consider the following 91-residue polypeptide: Small ribosomal subunit protein bS20 (91 aa).

It belongs to the bacterial ribosomal protein bS20 family.

In terms of biological role, binds directly to 16S ribosomal RNA. The sequence is that of Small ribosomal subunit protein bS20 from Thermosipho melanesiensis (strain DSM 12029 / CIP 104789 / BI429).